The following is a 493-amino-acid chain: 5'-3' exonuclease PLD3 (493 aa).

Residues 1 to 37 (MSSKVEYKPIQPHEEAENHFLQHELHKVKARKYYRCA) lie on the Cytoplasmic side of the membrane. A helical; Signal-anchor for type II membrane protein membrane pass occupies residues 38–58 (LVVAIIITLVFCILASQLLLF). Residues 59-493 (PFLSITSQTT…LSSWKEKCIF (435 aa)) are Lumenal-facing. Asn-99 carries N-linked (GlcNAc...) asparagine glycosylation. The 28-residue stretch at 197–224 (TDGILHTKFWVVDNEHFYIGSANMDWRS) folds into the PLD phosphodiesterase 1 domain. Active-site residues include His-202, Lys-204, and Asp-209. Residues Asn-237, Asn-259, Asn-269, Asn-285, and Asn-388 are each glycosylated (N-linked (GlcNAc...) asparagine). A PLD phosphodiesterase 2 domain is found at 412–438 (YARVNHNKYMVTDRVAYIGTSNWSGDY). Active-site residues include His-417, Lys-419, and Asp-424. 3 N-linked (GlcNAc...) asparagine glycosylation sites follow: Asn-433, Asn-450, and Asn-476.

This sequence belongs to the phospholipase D family. In terms of processing, N-glycosylated. Proteolytically processed to a soluble form that is stable within endosomes and lysosomes. During transport through the secretory pathway becomes proteolysed by cysteine proteases, thereby releasing a stable soluble lysosomal lumenal polypeptide, whereas the transmembrane-bound fragment is rapidly degraded. Its transport route to lysosomes involves ubiquitination and the ESCRT complex. Post-translationally, ubiquitinated. Ubiquitination mediates sorting into lysosomes.

It localises to the endoplasmic reticulum membrane. The protein resides in the lysosome lumen. Its subcellular location is the early endosome membrane. It is found in the late endosome membrane. The protein localises to the golgi apparatus membrane. It localises to the endosome membrane. It carries out the reaction Exonucleolytic cleavage in the 5'- to 3'-direction to yield nucleoside 3'-phosphates.. 5'-&gt;3' DNA exonuclease which digests single-stranded DNA (ssDNA). Regulates inflammatory cytokine responses via the degradation of nucleic acids, by reducing the concentration of ssDNA able to stimulate TLR9, a nucleotide-sensing receptor in collaboration with PLD4. May be important in myotube formation. Plays a role in lysosomal homeostasis. Involved in the regulation of endosomal protein sorting. This is 5'-3' exonuclease PLD3 (pld3) from Xenopus laevis (African clawed frog).